Reading from the N-terminus, the 163-residue chain is Fatty acid-binding protein homolog (163 aa).

The first 23 residues, 1-23, serve as a signal peptide directing secretion; sequence MRCLVALILTVLIVTPEVEAKTL.

This sequence belongs to the calycin superfamily. Fatty-acid binding protein (FABP) family. In terms of tissue distribution, abundant in the fluid surrounding the developing embryo of Ascaris suum.

Its function is as follows. May play a role in sequestering potentially toxic fatty acids and their peroxidation products, or it may be involved in the maintenance of the impermeable lipid layer of the eggshell. This chain is Fatty acid-binding protein homolog, found in Ascaris suum (Pig roundworm).